The chain runs to 142 residues: Transcription antitermination protein NusB (142 aa).

It belongs to the NusB family.

Its function is as follows. Involved in transcription antitermination. Required for transcription of ribosomal RNA (rRNA) genes. Binds specifically to the boxA antiterminator sequence of the ribosomal RNA (rrn) operons. The chain is Transcription antitermination protein NusB from Levilactobacillus brevis (strain ATCC 367 / BCRC 12310 / CIP 105137 / JCM 1170 / LMG 11437 / NCIMB 947 / NCTC 947) (Lactobacillus brevis).